The primary structure comprises 576 residues: Putative diflavin flavoprotein A 1 (576 aa).

Residues 48–240 (RNGTTYNSFL…LAIKTVATGH (193 aa)) form a zinc metallo-hydrolase region. Residues His97, Glu99, Asp101, His164, Asp183, and His240 each coordinate Fe cation. A Flavodoxin-like domain is found at 269 to 431 (VALFYAEDYG…DLEKALGRIS (163 aa)). Positions 432-576 (TGLYIITTKK…VHHRKVGNHY (145 aa)) are flavodoxin-reductase-like.

In the N-terminal section; belongs to the zinc metallo-hydrolase group 3 family. This sequence in the C-terminal section; belongs to the flavodoxin reductase family. Fe cation serves as cofactor.

Mediates electron transfer from NADH to oxygen, reducing it to water. This modular protein has 3 redox cofactors, in other organisms the same activity requires 2 or 3 proteins. This Nostoc sp. (strain PCC 7120 / SAG 25.82 / UTEX 2576) protein is Putative diflavin flavoprotein A 1 (dfa1).